The chain runs to 131 residues: MSEIPGDLKFLKSHEWARVESDGRVTVGISDHAQGLLGDLVYVELPGVGDTVQVGNGAAVVESVKAASDVYSPVSGTVVEVNSALSDKPETINEDAYGEGWIFVVEIDDKEQLNDLLDPDDYAELLEDDDH.

The Lipoyl-binding domain maps to 24 to 106; sequence RVTVGISDHA…YGEGWIFVVE (83 aa). At K65 the chain carries N6-lipoyllysine.

The protein belongs to the GcvH family. As to quaternary structure, the glycine cleavage system is composed of four proteins: P, T, L and H. (R)-lipoate is required as a cofactor.

In terms of biological role, the glycine cleavage system catalyzes the degradation of glycine. The H protein shuttles the methylamine group of glycine from the P protein to the T protein. This is Glycine cleavage system H protein from Xanthomonas euvesicatoria pv. vesicatoria (strain 85-10) (Xanthomonas campestris pv. vesicatoria).